We begin with the raw amino-acid sequence, 278 residues long: Rhomboid protease GlpG (278 aa).

The next 6 helical transmembrane spans lie at 94–114 (AGPLTLSVMVLCIAIYILMLI), 143–163 (AFLHFSLLHILFNLMWWWYLG), 175–195 (LLVLTIVSAVFSGWGQSLFSG), 196–216 (ANFGGLSGVVYALMGYVWLTG), 224–241 (ISLPRGLMAFSVLWLIAG), and 245–267 (ILGLSIANAAHVSGLIIGLLMAF). Catalysis depends on Ser-202, which acts as the Nucleophile. The active site involves His-255.

The protein belongs to the peptidase S54 family.

The protein localises to the cell inner membrane. It catalyses the reaction Cleaves type-1 transmembrane domains using a catalytic dyad composed of serine and histidine that are contributed by different transmembrane domains.. Its function is as follows. Rhomboid-type serine protease that catalyzes intramembrane proteolysis. The sequence is that of Rhomboid protease GlpG from Yersinia pestis bv. Antiqua (strain Antiqua).